The primary structure comprises 421 residues: UPF0300 protein C737.04 (421 aa).

The protein belongs to the UPF0300 family.

It localises to the cytoplasm. The polypeptide is UPF0300 protein C737.04 (Schizosaccharomyces pombe (strain 972 / ATCC 24843) (Fission yeast)).